The chain runs to 299 residues: Oxygen-dependent coproporphyrinogen-III oxidase (299 aa).

S92 contacts substrate. Residues H96 and H106 each coordinate a divalent metal cation. Catalysis depends on H106, which acts as the Proton donor. N108 to R110 provides a ligand contact to substrate. H145 and H175 together coordinate a divalent metal cation. The interval Y240–E275 is important for dimerization. G258 to R260 contributes to the substrate binding site.

This sequence belongs to the aerobic coproporphyrinogen-III oxidase family. In terms of assembly, homodimer. Requires a divalent metal cation as cofactor.

Its subcellular location is the cytoplasm. The enzyme catalyses coproporphyrinogen III + O2 + 2 H(+) = protoporphyrinogen IX + 2 CO2 + 2 H2O. Its pathway is porphyrin-containing compound metabolism; protoporphyrin-IX biosynthesis; protoporphyrinogen-IX from coproporphyrinogen-III (O2 route): step 1/1. In terms of biological role, involved in the heme biosynthesis. Catalyzes the aerobic oxidative decarboxylation of propionate groups of rings A and B of coproporphyrinogen-III to yield the vinyl groups in protoporphyrinogen-IX. This is Oxygen-dependent coproporphyrinogen-III oxidase from Salmonella typhi.